Here is a 309-residue protein sequence, read N- to C-terminus: Porphobilinogen deaminase (309 aa).

Position 241 is an S-(dipyrrolylmethanemethyl)cysteine (C241).

Belongs to the HMBS family. As to quaternary structure, monomer. The cofactor is dipyrromethane.

The enzyme catalyses 4 porphobilinogen + H2O = hydroxymethylbilane + 4 NH4(+). It functions in the pathway porphyrin-containing compound metabolism; protoporphyrin-IX biosynthesis; coproporphyrinogen-III from 5-aminolevulinate: step 2/4. Functionally, tetrapolymerization of the monopyrrole PBG into the hydroxymethylbilane pre-uroporphyrinogen in several discrete steps. This is Porphobilinogen deaminase from Desulforamulus reducens (strain ATCC BAA-1160 / DSM 100696 / MI-1) (Desulfotomaculum reducens).